Here is a 1399-residue protein sequence, read N- to C-terminus: DNA-directed RNA polymerase subunit beta' (1399 aa).

4 residues coordinate Zn(2+): Cys-71, Cys-73, Cys-86, and Cys-89. Mg(2+) contacts are provided by Asp-462, Asp-464, and Asp-466. Zn(2+) is bound by residues Cys-810, Cys-884, Cys-891, and Cys-894.

It belongs to the RNA polymerase beta' chain family. As to quaternary structure, the RNAP catalytic core consists of 2 alpha, 1 beta, 1 beta' and 1 omega subunit. When a sigma factor is associated with the core the holoenzyme is formed, which can initiate transcription. The cofactor is Mg(2+). It depends on Zn(2+) as a cofactor.

It carries out the reaction RNA(n) + a ribonucleoside 5'-triphosphate = RNA(n+1) + diphosphate. In terms of biological role, DNA-dependent RNA polymerase catalyzes the transcription of DNA into RNA using the four ribonucleoside triphosphates as substrates. The polypeptide is DNA-directed RNA polymerase subunit beta' (Chelativorans sp. (strain BNC1)).